A 326-amino-acid chain; its full sequence is Meso-diaminopimelate D-dehydrogenase (326 aa).

Residues 11 to 14 (YGNL), 35 to 37 (TRR), 69 to 72 (CGGS), 92 to 94 (SFD), and 121 to 125 (VGWDP) each bind NADP(+). Substrate-binding positions include Asp94, Asp124, Trp148, 154-155 (QG), Thr173, Arg199, His249, and Asn276.

Belongs to the diaminopimelate dehydrogenase family. In terms of assembly, homodimer.

It carries out the reaction meso-2,6-diaminopimelate + NADP(+) + H2O = (S)-2-amino-6-oxoheptanedioate + NH4(+) + NADPH + H(+). It participates in amino-acid biosynthesis; L-lysine biosynthesis via DAP pathway; DL-2,6-diaminopimelate from (S)-tetrahydrodipicolinate: step 1/1. Its activity is regulated as follows. L,L-2,6-diaminopimelate, D,D-2,6-diaminopimelate and meso-2,5-diaminoadipate competitively inhibit the oxidation of meso-2,6-diaminopimelate. L-2-amino-6-methylene-pimelate is also a potent competitive inhibitor (5 uM) of this reaction. Glyoxylate inhibits the reductive amination of L-2-amino-6-oxopimelate about 30%. The enzyme is inhibited completely by p-chloromercuribenzoate and HgCl(2) in vitro. In terms of biological role, catalyzes the reversible NADPH-dependent reductive amination of L-2-amino-6-oxopimelate, the acyclic form of L-tetrahydrodipicolinate, to generate the meso compound, D,L-2,6-diaminopimelate. Probably plays a role in lysine biosynthesis. Exhibits a high substrate specificity, since alpha-ketoglutarate, pyruvate, oxaloacetate, glyoxylate, alpha-ketobutyrate, alpha-ketovalerate, alpha-ketocaproate, alpha-ketoisocaproate, alpha-ketoisovalerate, and phenylpyruvate are not substrates for the reductive amination reaction, and L,L-2,6-diaminopimelate, D,D-2,6-diaminopimelate, DL-alpha-aminopimelate, meso- and DL-2,5-diaminoadipate, L-djenkolate, L-cystine, L-lysine, S-(beta-aminoethy1)-L-homocysteine, L-ornithine, L-arginine, L-alpha,gamma-diaminobutyrate, L-histidine, L-phenylalanine, L-tyrosine, L-glutamate, L-aspartate, L-leucine, L-valine, L-methionine, L-serine, L-alanine, L-alpha-aminobutyrate, D-lysine, D-glutamate, D-leucine, D-alanine, D-phenylalanine, epsilon-aminocaproate, 7-aminoheptanoate, and 8-aminooctanoate are not substrates for the oxidative deamination reaction. Cannot use NAD(+) or NAD(+) analogs instead of NADP(+) for the oxidative deamination reaction. This chain is Meso-diaminopimelate D-dehydrogenase (dapdh), found in Lysinibacillus sphaericus (Bacillus sphaericus).